We begin with the raw amino-acid sequence, 439 residues long: Keratin, type I cytoskeletal 40 (439 aa).

The tract at residues 1 to 89 (MASDGSPSCC…CEEGSFNSNE (89 aa)) is head. In terms of domain architecture, IF rod spans 89–400 (EKETMQFLND…GLLEKEDSRL (312 aa)). Positions 90–124 (KETMQFLNDRLASYLERVRSLEENNAELECRIREQ) are coil 1A. The segment at 125 to 135 (CEPNAPLVCPD) is linker 1. The coil 1B stretch occupies residues 136 to 236 (YQRYFDTIEE…HEEEVNLLRE (101 aa)). The linker 12 stretch occupies residues 237-252 (QLGDRLSVELDTAPTV). Residues 253–396 (DLNKVLDEMR…NTYRGLLEKE (144 aa)) form a coil 2 region. The segment at 397 to 439 (DSRLPCNPGSGAPMPNSTCEPCSNSMCEPCSAYVICTVENCCA) is tail.

Belongs to the intermediate filament family. As to quaternary structure, heterotetramer of two type I and two type II keratins.

Its function is as follows. May play a role in late hair differentiation. The chain is Keratin, type I cytoskeletal 40 (Krt40) from Mus musculus (Mouse).